The chain runs to 153 residues: UPF0756 membrane protein lmo1568 (153 aa).

The next 4 membrane-spanning stretches (helical) occupy residues 6–26 (MLFL…SLII), 54–74 (WGVT…QIGF), 80–100 (SFKS…SILA), and 117–137 (LVFG…GPVI).

The protein belongs to the UPF0756 family.

The protein resides in the cell membrane. The sequence is that of UPF0756 membrane protein lmo1568 from Listeria monocytogenes serovar 1/2a (strain ATCC BAA-679 / EGD-e).